The sequence spans 183 residues: Interleukin-24 (183 aa).

The signal sequence occupies residues 1-28 (MQTSLRQQILPGLSLILLVLNQVPELQG). Cysteine 36 and cysteine 83 form a disulfide bridge. A glycan (N-linked (GlcNAc...) asparagine) is linked at asparagine 76. Residue lysine 99 forms a Glycyl lysine isopeptide (Lys-Gly) (interchain with G-Cter in ubiquitin) linkage.

This sequence belongs to the IL-10 family. Post-translationally, glycosylated. Ubiquitination at Lys-99 promotes proteasomal degradation.

It localises to the secreted. Functionally, multifunctional cytokine mainly produced by T-cells that plays a regulatory role in immune response, tissue homeostasis, host defense, and oncogenesis. Possesses antiviral functions and induces the type I interferon response during influenza infection. Signals through two receptor complexes IL20RA/IL20RB or IL20RB/IL22RA1. In turn, stimulates the JAK1-STAT3 and MAPK pathways and promotes the secretion of pro-inflammatory mediators including IL8 and MMP1. Intracellularly, maintains endoplasmic reticulum homeostasis by restricting the eIF2alpha-CHOP pathway-mediated stress signal. In addition, acts as a quality control mechanism for the ubiquitin proteasome system by alerting the cell to proteasome dysfunction through activation of PKR/EIF2AK2. This Rattus norvegicus (Rat) protein is Interleukin-24 (Il24).